The sequence spans 367 residues: 4-hydroxy-3-methylbut-2-en-1-yl diphosphate synthase (flavodoxin) (367 aa).

[4Fe-4S] cluster contacts are provided by cysteine 270, cysteine 273, cysteine 305, and glutamate 312.

The protein belongs to the IspG family. It depends on [4Fe-4S] cluster as a cofactor.

It carries out the reaction (2E)-4-hydroxy-3-methylbut-2-enyl diphosphate + oxidized [flavodoxin] + H2O + 2 H(+) = 2-C-methyl-D-erythritol 2,4-cyclic diphosphate + reduced [flavodoxin]. It functions in the pathway isoprenoid biosynthesis; isopentenyl diphosphate biosynthesis via DXP pathway; isopentenyl diphosphate from 1-deoxy-D-xylulose 5-phosphate: step 5/6. In terms of biological role, converts 2C-methyl-D-erythritol 2,4-cyclodiphosphate (ME-2,4cPP) into 1-hydroxy-2-methyl-2-(E)-butenyl 4-diphosphate. In Pasteurella multocida (strain Pm70), this protein is 4-hydroxy-3-methylbut-2-en-1-yl diphosphate synthase (flavodoxin).